Consider the following 143-residue polypeptide: Hemoglobin subunit alpha (143 aa).

One can recognise a Globin domain in the interval 2–143; that stretch reads RFSQDDEVLI…IVHVLISLYR (142 aa). His-60 contacts O2. His-89 provides a ligand contact to heme b.

This sequence belongs to the globin family. In terms of assembly, heterotetramer of two alpha chains and two beta chains. In terms of tissue distribution, red blood cells.

Involved in oxygen transport from the lung to the various peripheral tissues. The protein is Hemoglobin subunit alpha (HBA) of Lepidosiren paradoxus (South American lungfish).